We begin with the raw amino-acid sequence, 198 residues long: Heat shock 70 kDa protein (198 aa).

Over residues 170 to 191 (GGGVPSGMPGGMPGAGGGGGKG) the composition is skewed to gly residues. The interval 170-198 (GGGVPSGMPGGMPGAGGGGGKGPTIEEVD) is disordered.

It belongs to the heat shock protein 70 family.

The sequence is that of Heat shock 70 kDa protein from Schistosoma japonicum (Blood fluke).